A 318-amino-acid polypeptide reads, in one-letter code: Nucleotide-binding protein Lcho_3490 (318 aa).

An ATP-binding site is contributed by glycine 35 to serine 42. Aspartate 84 to asparagine 87 contributes to the GTP binding site.

This sequence belongs to the RapZ-like family.

Functionally, displays ATPase and GTPase activities. In Leptothrix cholodnii (strain ATCC 51168 / LMG 8142 / SP-6) (Leptothrix discophora (strain SP-6)), this protein is Nucleotide-binding protein Lcho_3490.